We begin with the raw amino-acid sequence, 389 residues long: S-adenosylmethionine synthase 3 (389 aa).

E9 contributes to the Mg(2+) binding site. H15 serves as a coordination point for ATP. K(+) is bound at residue E43. Residues E56 and Q99 each coordinate L-methionine. ATP-binding positions include 167-169 (DGK), 235-238 (SGRF), D246, 252-253 (RK), A269, K273, and K277. D246 contacts L-methionine. K277 is an L-methionine binding site.

This sequence belongs to the AdoMet synthase family. Homotetramer. Mn(2+) is required as a cofactor. It depends on Mg(2+) as a cofactor. Requires Co(2+) as cofactor. The cofactor is K(+).

It localises to the cytoplasm. It catalyses the reaction L-methionine + ATP + H2O = S-adenosyl-L-methionine + phosphate + diphosphate. The protein operates within amino-acid biosynthesis; S-adenosyl-L-methionine biosynthesis; S-adenosyl-L-methionine from L-methionine: step 1/1. Catalyzes the formation of S-adenosylmethionine from methionine and ATP. The reaction comprises two steps that are both catalyzed by the same enzyme: formation of S-adenosylmethionine (AdoMet) and triphosphate, and subsequent hydrolysis of the triphosphate. This Vitis vinifera (Grape) protein is S-adenosylmethionine synthase 3 (METK3).